A 61-amino-acid polypeptide reads, in one-letter code: uncharacterized protein (61 aa).

The next 2 helical transmembrane spans lie at 7 to 24 and 29 to 48; these read FNVF…YKLF and VSTT…IVGL.

The protein localises to the cell membrane. This is an uncharacterized protein from Bacillus subtilis (strain 168).